The primary structure comprises 305 residues: Ribonuclease BN (305 aa).

7 residues coordinate Zn(2+): His64, His66, Asp68, His69, His141, Asp212, and His270. The active-site Proton acceptor is Asp68.

Belongs to the RNase Z family. RNase BN subfamily. Homodimer. The cofactor is Zn(2+).

Zinc phosphodiesterase, which has both exoribonuclease and endoribonuclease activities. The polypeptide is Ribonuclease BN (Enterobacter sp. (strain 638)).